Reading from the N-terminus, the 156-residue chain is ATP synthase subunit b (156 aa).

A helical membrane pass occupies residues 7–27 (LIGQLIAFALFVAFCMKFVWP).

Belongs to the ATPase B chain family. F-type ATPases have 2 components, F(1) - the catalytic core - and F(0) - the membrane proton channel. F(1) has five subunits: alpha(3), beta(3), gamma(1), delta(1), epsilon(1). F(0) has three main subunits: a(1), b(2) and c(10-14). The alpha and beta chains form an alternating ring which encloses part of the gamma chain. F(1) is attached to F(0) by a central stalk formed by the gamma and epsilon chains, while a peripheral stalk is formed by the delta and b chains.

The protein resides in the cell inner membrane. In terms of biological role, f(1)F(0) ATP synthase produces ATP from ADP in the presence of a proton or sodium gradient. F-type ATPases consist of two structural domains, F(1) containing the extramembraneous catalytic core and F(0) containing the membrane proton channel, linked together by a central stalk and a peripheral stalk. During catalysis, ATP synthesis in the catalytic domain of F(1) is coupled via a rotary mechanism of the central stalk subunits to proton translocation. Its function is as follows. Component of the F(0) channel, it forms part of the peripheral stalk, linking F(1) to F(0). This is ATP synthase subunit b from Actinobacillus pleuropneumoniae serotype 5b (strain L20).